The sequence spans 469 residues: NADH-quinone oxidoreductase subunit N (469 aa).

A run of 14 helical transmembrane segments spans residues 2–22 (IALLPFILSLAATFINIFLCV), 28–48 (RYSINLNILFWVIIFISFFIV), 70–90 (FSFCFGVVLSALMIIFLISSF), 101–121 (EMFALASLAGFGLLAMSLSVE), 122–142 (LILTLIFLEVASISIYAMIAM), 157–177 (FLLSSFMSAFYLLGAAFVFGV), 194–214 (FLSIIGMILVLSMMFFKIAIF), 233–253 (GFLASAFKLASFAILIKLCFL), 261–281 (ILQGIFAILAILSMFAGNLLS), 290–310 (ILIAAGIVHSGYIFINLSSVG), 315–335 (IYPAIFYLSTYTIVVGFLFAI), 361–381 (AFAFTVICLSFIGFPYSVGFL), 398–418 (LAIFGIINTIFSVYYYLKIII), and 447–467 (ILFIILEGSGIFSIISFLNLF).

This sequence belongs to the complex I subunit 2 family. NDH-1 is composed of 14 different subunits. Subunits NuoA, H, J, K, L, M, N constitute the membrane sector of the complex.

The protein localises to the cell inner membrane. The enzyme catalyses a quinone + NADH + 5 H(+)(in) = a quinol + NAD(+) + 4 H(+)(out). NDH-1 shuttles electrons from NADH, via FMN and iron-sulfur (Fe-S) centers, to quinones in the respiratory chain. The immediate electron acceptor for the enzyme in this species is believed to be ubiquinone. Couples the redox reaction to proton translocation (for every two electrons transferred, four hydrogen ions are translocated across the cytoplasmic membrane), and thus conserves the redox energy in a proton gradient. The chain is NADH-quinone oxidoreductase subunit N from Campylobacter fetus subsp. fetus (strain 82-40).